The chain runs to 119 residues: Beta-2-microglobulin (119 aa).

A signal peptide spans 1–20 (MAPFVAIALLVLLSLSGLEA). One can recognise an Ig-like C1-type domain in the interval 25-114 (PKIQVYSRHP…VTFSTPKTVK (90 aa)). A disulfide bridge links C45 with C100.

This sequence belongs to the beta-2-microglobulin family. As to quaternary structure, heterodimer of an alpha chain and a beta chain. Beta-2-microglobulin is the beta-chain of major histocompatibility complex class I molecules.

It is found in the secreted. Its function is as follows. Component of the class I major histocompatibility complex (MHC). Involved in the presentation of peptide antigens to the immune system. The protein is Beta-2-microglobulin (B2M) of Cheracebus torquatus (Collared titi monkey).